The chain runs to 625 residues: Basic helix-loop-helix ARNT-like protein 1 (625 aa).

Residues 1–60 (MADQRMDISSTISDFMSPGPTDLLSSSLGTSGVDCNRKRKGSSTDYQESMDTDKDDPHGR) form a disordered region. The residue at position 17 (serine 17) is a Phosphoserine; by GSK3-beta. Positions 17–32 (SPGPTDLLSSSLGTSG) are enriched in low complexity. Threonine 21 bears the Phosphothreonine; by GSK3-beta mark. The Nuclear localization signal motif lies at 36 to 41 (NRKRKG). The span at 51–60 (DTDKDDPHGR) shows a compositional bias: basic and acidic residues. Residues 72 to 125 (NAREAHSQIEKRRRDKMNSFIDELASLVPTCNAMSRKLDKLTVLRMAVQHMKTL) form the bHLH domain. Serine 78 carries the phosphoserine modification. At serine 90 the chain carries Phosphoserine; by CK2. Positions 142–152 (LSDDELKHLIL) match the Nuclear export signal 1 motif. One can recognise a PAS 1 domain in the interval 143–215 (SDDELKHLIL…EQLSSSDTAP (73 aa)). Residue lysine 252 forms a Glycyl lysine isopeptide (Lys-Gly) (interchain with G-Cter in SUMO2 and SUMO3) linkage. Residue lysine 259 forms a Glycyl lysine isopeptide (Lys-Gly) (interchain with G-Cter in SUMO); alternate linkage. Lysine 259 participates in a covalent cross-link: Glycyl lysine isopeptide (Lys-Gly) (interchain with G-Cter in SUMO2); alternate. One can recognise a PAS 2 domain in the interval 325 to 395 (PQPVNGEIRV…ECHRQVLQTR (71 aa)). The Nuclear export signal 2 motif lies at 360-368 (LAYLPQELL). Residues 400-443 (TNCYKFKIKDGSFITLRSRWFSFMNPWTKEVEYIVSTNTVVLAN) form the PAC domain. Disordered stretches follow at residues 454 to 491 (QLTA…RAGA) and 510 to 594 (GSSP…SPSN). An interaction with CIART region spans residues 507 to 587 (RIRGSSPSSC…IGIDMIDNDQ (81 aa)). Low complexity predominate over residues 510 to 520 (GSSPSSCGSSP). Lysine 537 bears the N6-acetyllysine mark.

Component of the circadian clock oscillator which includes the CRY1/2 proteins, CLOCK or NPAS2, BMAL1 or BMAL2, CSNK1D and/or CSNK1E, TIMELESS and the PER1/2/3 proteins. Forms a heterodimer with CLOCK. The CLOCK-BMAL1 heterodimer is required for E-box-dependent transactivation, for CLOCK nuclear translocation and degradation, and, for phosphorylation of both CLOCK and BMAL1. Part of a nuclear complex which also includes RACK1 and PRKCA; RACK1 and PRKCA are recruited to the complex in a circadian manner. Interacts with NPAS2. Interacts with EZH2. Interacts with SUMO3. Interacts with SIRT1. Interacts with AHR. Interacts with ID1, ID2 and ID3. Interacts with DDX4. Interacts with OGT. Interacts with EED and SUZ12. Interacts with MTA1. Interacts with CIART. Interacts with HSP90. Interacts with KAT2B and EP300. Interacts with BHLHE40/DEC1 and BHLHE41/DEC2. Interacts with RELB and the interaction is enhanced in the presence of CLOCK. Interacts with PER1, PER2, CRY1 and CRY2 and this interaction requires a translocation to the nucleus. Interaction of the CLOCK-BMAL1 heterodimer with PER or CRY inhibits transcription activation. Interaction of the CLOCK-BMAL1 with CRY1 is independent of DNA but with PER2 is off DNA. The CLOCK-BMAL1 heterodimer interacts with GSK3B. Interacts with KDM5A. Interacts with KMT2A; in a circadian manner. Interacts with UBE3A. Interacts with PRKCG. Interacts with MAGEL2. Interacts with NCOA2. Interacts with THRAP3. The CLOCK-BMAL1 heterodimer interacts with PASD1. Interacts with PASD1. Interacts with USP9X. Interacts with PIWIL2 (via PIWI domain). Interacts with HDAC3. Interacts with HNF4A. In terms of processing, ubiquitinated, leading to its proteasomal degradation. Deubiquitinated by USP9X. Post-translationally, O-glycosylated; contains O-GlcNAc. O-glycosylation by OGT prevents protein degradation by inhibiting ubiquitination. It also stabilizes the CLOCK-BMAL1 heterodimer thereby increasing CLOCK-BMAL1-mediated transcription of genes in the negative loop of the circadian clock such as PER1/2/3 and CRY1/2. Acetylated on Lys-537 by CLOCK during the repression phase of the circadian cycle. Acetylation facilitates recruitment of CRY1 protein and initiates the repression phase of the circadian cycle. Acetylated at Lys-537 by KAT5 during the activation phase of the cycle, leading to recruitment of the positive transcription elongation factor b (P-TEFb) and BRD4, followed by productive elongation of circadian transcripts. Deacetylated by SIRT1, which may result in decreased protein stability. In terms of processing, phosphorylated upon dimerization with CLOCK. Phosphorylation enhances the transcriptional activity, alters the subcellular localization and decreases the stability of the CLOCK-BMAL1 heterodimer by promoting its degradation. Phosphorylation shows circadian variations in the liver with a peak between CT10 to CT14. Phosphorylation at Ser-90 by CK2 is essential for its nuclear localization, its interaction with CLOCK and controls CLOCK nuclear entry. Dephosphorylation at Ser-78 is important for dimerization with CLOCK and transcriptional activity. Post-translationally, sumoylated on Lys-259 upon dimerization with CLOCK. Predominantly conjugated to poly-SUMO2/3 rather than SUMO1 and the level of these conjugates undergo rhythmic variation, peaking at CT9-CT12. Sumoylation localizes it exclusively to the PML body and promotes its ubiquitination in the PML body, ubiquitin-dependent proteasomal degradation and the transcriptional activity of the CLOCK-BMAL1 heterodimer. Undergoes lysosome-mediated degradation in a time-dependent manner in the liver.

Its subcellular location is the nucleus. It localises to the cytoplasm. The protein localises to the PML body. Transcriptional activator which forms a core component of the circadian clock. The circadian clock, an internal time-keeping system, regulates various physiological processes through the generation of approximately 24 hour circadian rhythms in gene expression, which are translated into rhythms in metabolism and behavior. It is derived from the Latin roots 'circa' (about) and 'diem' (day) and acts as an important regulator of a wide array of physiological functions including metabolism, sleep, body temperature, blood pressure, endocrine, immune, cardiovascular, and renal function. Consists of two major components: the central clock, residing in the suprachiasmatic nucleus (SCN) of the brain, and the peripheral clocks that are present in nearly every tissue and organ system. Both the central and peripheral clocks can be reset by environmental cues, also known as Zeitgebers (German for 'timegivers'). The predominant Zeitgeber for the central clock is light, which is sensed by retina and signals directly to the SCN. The central clock entrains the peripheral clocks through neuronal and hormonal signals, body temperature and feeding-related cues, aligning all clocks with the external light/dark cycle. Circadian rhythms allow an organism to achieve temporal homeostasis with its environment at the molecular level by regulating gene expression to create a peak of protein expression once every 24 hours to control when a particular physiological process is most active with respect to the solar day. Transcription and translation of core clock components (CLOCK, NPAS2, BMAL1, BMAL2, PER1, PER2, PER3, CRY1 and CRY2) plays a critical role in rhythm generation, whereas delays imposed by post-translational modifications (PTMs) are important for determining the period (tau) of the rhythms (tau refers to the period of a rhythm and is the length, in time, of one complete cycle). A diurnal rhythm is synchronized with the day/night cycle, while the ultradian and infradian rhythms have a period shorter and longer than 24 hours, respectively. Disruptions in the circadian rhythms contribute to the pathology of cardiovascular diseases, cancer, metabolic syndromes and aging. A transcription/translation feedback loop (TTFL) forms the core of the molecular circadian clock mechanism. Transcription factors, CLOCK or NPAS2 and BMAL1 or BMAL2, form the positive limb of the feedback loop, act in the form of a heterodimer and activate the transcription of core clock genes and clock-controlled genes (involved in key metabolic processes), harboring E-box elements (5'-CACGTG-3') within their promoters. The core clock genes: PER1/2/3 and CRY1/2 which are transcriptional repressors form the negative limb of the feedback loop and interact with the CLOCK|NPAS2-BMAL1|BMAL2 heterodimer inhibiting its activity and thereby negatively regulating their own expression. This heterodimer also activates nuclear receptors NR1D1/2 and RORA/B/G, which form a second feedback loop and which activate and repress BMAL1 transcription, respectively. BMAL1 positively regulates myogenesis and negatively regulates adipogenesis via the transcriptional control of the genes of the canonical Wnt signaling pathway. Plays a role in normal pancreatic beta-cell function; regulates glucose-stimulated insulin secretion via the regulation of antioxidant genes NFE2L2/NRF2 and its targets SESN2, PRDX3, CCLC and CCLM. Negatively regulates the mTORC1 signaling pathway; regulates the expression of MTOR and DEPTOR. Controls diurnal oscillations of Ly6C inflammatory monocytes; rhythmic recruitment of the PRC2 complex imparts diurnal variation to chemokine expression that is necessary to sustain Ly6C monocyte rhythms. Regulates the expression of HSD3B2, STAR, PTGS2, CYP11A1, CYP19A1 and LHCGR in the ovary and also the genes involved in hair growth. Plays an important role in adult hippocampal neurogenesis by regulating the timely entry of neural stem/progenitor cells (NSPCs) into the cell cycle and the number of cell divisions that take place prior to cell-cycle exit. Regulates the circadian expression of CIART and KLF11. The CLOCK-BMAL1 heterodimer regulates the circadian expression of SERPINE1/PAI1, VWF, B3, CCRN4L/NOC, NAMPT, DBP, MYOD1, PPARGC1A, PPARGC1B, SIRT1, GYS2, F7, NGFR, GNRHR, BHLHE40/DEC1, ATF4, MTA1, KLF10 and also genes implicated in glucose and lipid metabolism. Promotes rhythmic chromatin opening, regulating the DNA accessibility of other transcription factors. The NPAS2-BMAL1 heterodimer positively regulates the expression of MAOA, F7 and LDHA and modulates the circadian rhythm of daytime contrast sensitivity by regulating the rhythmic expression of adenylate cyclase type 1 (ADCY1) in the retina. The preferred binding motif for the CLOCK-BMAL1 heterodimer is 5'-CACGTGA-3', which contains a flanking adenine nucleotide at the 3-prime end of the canonical 6-nucleotide E-box sequence. CLOCK specifically binds to the half-site 5'-CAC-3', while BMAL1 binds to the half-site 5'-GTGA-3'. The CLOCK-BMAL1 heterodimer also recognizes the non-canonical E-box motifs 5'-AACGTGA-3' and 5'-CATGTGA-3'. Essential for the rhythmic interaction of CLOCK with ASS1 and plays a critical role in positively regulating CLOCK-mediated acetylation of ASS1. Plays a role in protecting against lethal sepsis by limiting the expression of immune checkpoint protein CD274 in macrophages in a PKM2-dependent manner. Regulates the diurnal rhythms of skeletal muscle metabolism via transcriptional activation of genes promoting triglyceride synthesis (DGAT2) and metabolic efficiency (COQ10B). This Pongo abelii (Sumatran orangutan) protein is Basic helix-loop-helix ARNT-like protein 1 (BMAL1).